The sequence spans 440 residues: Xylose isomerase (440 aa).

Active-site residues include histidine 100 and aspartate 103. The Mg(2+) site is built by glutamate 231, glutamate 267, histidine 270, aspartate 295, aspartate 306, aspartate 308, and aspartate 338.

The protein belongs to the xylose isomerase family. In terms of assembly, homotetramer. Requires Mg(2+) as cofactor.

Its subcellular location is the cytoplasm. The catalysed reaction is alpha-D-xylose = alpha-D-xylulofuranose. In Paraburkholderia xenovorans (strain LB400), this protein is Xylose isomerase.